Here is a 425-residue protein sequence, read N- to C-terminus: uncharacterized protein (425 aa).

Residues 55–181 (RYSHSLGVYE…DLDADRMDYL (127 aa)) form the HD domain.

This is an uncharacterized protein from Mycoplasma pneumoniae (strain ATCC 29342 / M129 / Subtype 1) (Mycoplasmoides pneumoniae).